A 103-amino-acid chain; its full sequence is Large ribosomal subunit protein bL21 (103 aa).

This sequence belongs to the bacterial ribosomal protein bL21 family. Part of the 50S ribosomal subunit. Contacts protein L20.

Its function is as follows. This protein binds to 23S rRNA in the presence of protein L20. The sequence is that of Large ribosomal subunit protein bL21 from Actinobacillus pleuropneumoniae serotype 7 (strain AP76).